A 156-amino-acid polypeptide reads, in one-letter code: Transcription antitermination protein NusB (156 aa).

Belongs to the NusB family.

In terms of biological role, involved in transcription antitermination. Required for transcription of ribosomal RNA (rRNA) genes. Binds specifically to the boxA antiterminator sequence of the ribosomal RNA (rrn) operons. This is Transcription antitermination protein NusB from Bartonella tribocorum (strain CIP 105476 / IBS 506).